Consider the following 129-residue polypeptide: Large ribosomal subunit protein bL12 (129 aa).

This sequence belongs to the bacterial ribosomal protein bL12 family. Homodimer. Part of the ribosomal stalk of the 50S ribosomal subunit. Forms a multimeric L10(L12)X complex, where L10 forms an elongated spine to which 2 to 4 L12 dimers bind in a sequential fashion. Binds GTP-bound translation factors.

Its function is as follows. Forms part of the ribosomal stalk which helps the ribosome interact with GTP-bound translation factors. Is thus essential for accurate translation. The protein is Large ribosomal subunit protein bL12 of Treponema pallidum (strain Nichols).